The sequence spans 372 residues: Aminomethyltransferase (372 aa).

The protein belongs to the GcvT family. As to quaternary structure, the glycine cleavage system is composed of four proteins: P, T, L and H.

It carries out the reaction N(6)-[(R)-S(8)-aminomethyldihydrolipoyl]-L-lysyl-[protein] + (6S)-5,6,7,8-tetrahydrofolate = N(6)-[(R)-dihydrolipoyl]-L-lysyl-[protein] + (6R)-5,10-methylene-5,6,7,8-tetrahydrofolate + NH4(+). Functionally, the glycine cleavage system catalyzes the degradation of glycine. This Synechococcus elongatus (strain ATCC 33912 / PCC 7942 / FACHB-805) (Anacystis nidulans R2) protein is Aminomethyltransferase.